The primary structure comprises 3005 residues: Highly reducing polyketide synthase AFT9-1 (3005 aa).

A Ketosynthase family 3 (KS3) domain is found at 1–337; that stretch reads MDPQQRLLLE…GTNAHAILER (337 aa). Catalysis depends on for beta-ketoacyl synthase activity residues cysteine 87, histidine 222, and histidine 260. A malonyl-CoA:ACP transacylase (MAT) domain region spans residues 437 to 751; it reads VFTGQGAQWP…SYMSALVRGS (315 aa). The N-terminal hotdog fold stretch occupies residues 821–936; it reads HDLLGLKMTD…GSVEVKYAAA (116 aa). The interval 821 to 1114 is dehydratase (DH) domain; that stretch reads HDLLGLKMTD…SGLELRRLAP (294 aa). Positions 821–1118 constitute a PKS/mFAS DH domain; it reads HDLLGLKMTD…LRRLAPTGQP (298 aa). The Proton acceptor; for dehydratase activity role is filled by histidine 853. The tract at residues 963-1118 is C-terminal hotdog fold; that stretch reads IEKISSQELY…LRRLAPTGQP (156 aa). Catalysis depends on aspartate 1028, which acts as the Proton donor; for dehydratase activity. The interval 1259-1445 is methyltransferase (CMet) domain; that stretch reads ADDSSKRCYD…MRKASLNMQL (187 aa). Positions 1683 to 1985 are enoyl reductase (ER) (ER) domain; that stretch reads EFMKMPVFTE…QHHRNESTVL (303 aa). The interval 2008 to 2191 is ketoreductase (KR) domain; sequence ATYVVSGGRG…YMSLNVGTIE (184 aa). Residues 2293 to 2375 form the Carrier domain; that stretch reads TRDFEKISQL…SLGAKVASRS (83 aa). Serine 2335 carries the O-(pantetheine 4'-phosphoryl)serine modification.

Its pathway is mycotoxin biosynthesis. In terms of biological role, highly reducing polyketide synthase; part of the gene clusters that mediate the biosynthesis of the host-selective toxins (HSTs) AF-toxins responsible for Alternaria black spot of strawberry disease by the strawberry pathotype. AF-toxin I and III are valine derivatives of 2,3-dyhydroxy-isovaleric acid and 2-hydroxy-isovaleric acid respectively, while AF II is an isoleucine derivative of 2-hydroxy-valeric acid. These derivatives are bound to a 9,10-epoxy-8-hydroxy-9-methyl-decatrienoic acid (EDA) moiety. On cellular level, AF-toxins affect plasma membrane of susceptible cells and cause a sudden increase in loss of K(+) after a few minutes of toxin treatment. The aldo-keto reductase AFTS1 catalyzes the conversion of 2-keto-isovaleric acid (2-KIV) to 2-hydroxy-isovaleric acid (2-HIV) by reduction of its ketone to an alcohol. The acyl-CoA ligase AFT1, the hydrolase AFT2 and the enoyl-CoA hydratases AFT3 and AFT6, but also the polyketide synthase AFT9, the acyl-CoA dehydrogenase AFT10, the cytochrome P450 monooxygenase AFT11 and the oxidoreductase AFT12 are all involved in the biosynthesis of the AK-, AF- and ACT-toxin common EDA structural moiety. The exact function of each enzyme, and of additional enzymes identified within the AF-toxin clusters have still to be determined. The polypeptide is Highly reducing polyketide synthase AFT9-1 (Alternaria alternata (Alternaria rot fungus)).